Here is a 492-residue protein sequence, read N- to C-terminus: Probable malate:quinone oxidoreductase 1 (492 aa).

This sequence belongs to the MQO family. FAD is required as a cofactor.

It carries out the reaction (S)-malate + a quinone = a quinol + oxaloacetate. The protein operates within carbohydrate metabolism; tricarboxylic acid cycle; oxaloacetate from (S)-malate (quinone route): step 1/1. This chain is Probable malate:quinone oxidoreductase 1, found in Staphylococcus aureus (strain MW2).